Here is a 385-residue protein sequence, read N- to C-terminus: 8-amino-7-oxononanoate synthase (385 aa).

Substrate is bound at residue R21. Residue 108-109 participates in pyridoxal 5'-phosphate binding; that stretch reads GF. Residue H133 participates in substrate binding. Residues S179, H207, and T233 each coordinate pyridoxal 5'-phosphate. K236 carries the post-translational modification N6-(pyridoxal phosphate)lysine. T352 serves as a coordination point for substrate.

This sequence belongs to the class-II pyridoxal-phosphate-dependent aminotransferase family. BioF subfamily. In terms of assembly, homodimer. It depends on pyridoxal 5'-phosphate as a cofactor.

It carries out the reaction 6-carboxyhexanoyl-[ACP] + L-alanine + H(+) = (8S)-8-amino-7-oxononanoate + holo-[ACP] + CO2. It functions in the pathway cofactor biosynthesis; biotin biosynthesis. Catalyzes the decarboxylative condensation of pimeloyl-[acyl-carrier protein] and L-alanine to produce 8-amino-7-oxononanoate (AON), [acyl-carrier protein], and carbon dioxide. This is 8-amino-7-oxononanoate synthase from Salmonella newport (strain SL254).